Consider the following 270-residue polypeptide: Carboxy-S-adenosyl-L-methionine synthase (270 aa).

Residues Y65, 90-92 (GCS), 143-144 (DI), N158, and R225 contribute to the S-adenosyl-L-methionine site.

Belongs to the class I-like SAM-binding methyltransferase superfamily. Cx-SAM synthase family. In terms of assembly, homodimer.

It carries out the reaction prephenate + S-adenosyl-L-methionine = carboxy-S-adenosyl-L-methionine + 3-phenylpyruvate + H2O. Functionally, catalyzes the conversion of S-adenosyl-L-methionine (SAM) to carboxy-S-adenosyl-L-methionine (Cx-SAM). The sequence is that of Carboxy-S-adenosyl-L-methionine synthase from Chromohalobacter salexigens (strain ATCC BAA-138 / DSM 3043 / CIP 106854 / NCIMB 13768 / 1H11).